We begin with the raw amino-acid sequence, 279 residues long: Thymidylate synthase (279 aa).

Residue 133–134 (RR) participates in dUMP binding. The active-site Nucleophile is the C154. DUMP is bound by residues 178–181 (RSND), N189, and 219–221 (HIY). A (6R)-5,10-methylene-5,6,7,8-tetrahydrofolate-binding site is contributed by D181. A278 is a binding site for (6R)-5,10-methylene-5,6,7,8-tetrahydrofolate.

This sequence belongs to the thymidylate synthase family. Bacterial-type ThyA subfamily. As to quaternary structure, homodimer.

It localises to the cytoplasm. It carries out the reaction dUMP + (6R)-5,10-methylene-5,6,7,8-tetrahydrofolate = 7,8-dihydrofolate + dTMP. It functions in the pathway pyrimidine metabolism; dTTP biosynthesis. Catalyzes the reductive methylation of 2'-deoxyuridine-5'-monophosphate (dUMP) to 2'-deoxythymidine-5'-monophosphate (dTMP) while utilizing 5,10-methylenetetrahydrofolate (mTHF) as the methyl donor and reductant in the reaction, yielding dihydrofolate (DHF) as a by-product. This enzymatic reaction provides an intracellular de novo source of dTMP, an essential precursor for DNA biosynthesis. In Streptococcus agalactiae serotype Ia (strain ATCC 27591 / A909 / CDC SS700), this protein is Thymidylate synthase.